Consider the following 155-residue polypeptide: Deoxyuridine 5'-triphosphate nucleotidohydrolase (155 aa).

Substrate is bound by residues 74 to 76 (RSG), Asn-87, and 91 to 93 (TID).

This sequence belongs to the dUTPase family. Mg(2+) is required as a cofactor.

The enzyme catalyses dUTP + H2O = dUMP + diphosphate + H(+). It participates in pyrimidine metabolism; dUMP biosynthesis; dUMP from dCTP (dUTP route): step 2/2. Its function is as follows. This enzyme is involved in nucleotide metabolism: it produces dUMP, the immediate precursor of thymidine nucleotides and it decreases the intracellular concentration of dUTP so that uracil cannot be incorporated into DNA. This chain is Deoxyuridine 5'-triphosphate nucleotidohydrolase, found in Dinoroseobacter shibae (strain DSM 16493 / NCIMB 14021 / DFL 12).